The following is a 378-amino-acid chain: Ribosomal RNA large subunit methyltransferase G (378 aa).

Belongs to the methyltransferase superfamily. RlmG family.

The protein resides in the cytoplasm. The catalysed reaction is guanosine(1835) in 23S rRNA + S-adenosyl-L-methionine = N(2)-methylguanosine(1835) in 23S rRNA + S-adenosyl-L-homocysteine + H(+). In terms of biological role, specifically methylates the guanine in position 1835 (m2G1835) of 23S rRNA. In Escherichia coli O1:K1 / APEC, this protein is Ribosomal RNA large subunit methyltransferase G.